We begin with the raw amino-acid sequence, 421 residues long: E3 ubiquitin-protein ligase RMD5 (421 aa).

One can recognise a CTLH domain in the interval 176-236 (EFIEMGQIVH…QIVKHGNPVE (61 aa)). The RING-Gid-type zinc-finger motif lies at 361-404 (CPVLKEETTTENPPYSLACHHIISKKALDRLSKNGTITFKCPYC).

Belongs to the RMD5/GID2 family. As to quaternary structure, identified in the GID/CTLH complex. In the absence of stress, the complex exists as an inactive anticipatory complex (GID(Ant)), composed of VID30/GID1, the E3 ubiquitin-ligase RMD5/GID2, VID28/GID5, GID8, and the RING-like subunit FYV10/GID9, awaiting a substrate receptor to form the active E3 ligase complex. When cells are shifted to glucose-containing medium, the substrate receptor VID24/GID4 is induced and becomes part of the complex, named GID(SR4). Additionally, GID7 transforms the GID(SR4) E3 ligase core into a higher-order supramolecular assembly (Chelator-GID(SR4)) specifically tailored for FBP1 ubiquitination. Under osmotic or heat stress, the substrate receptor GID10 is induced and becomes part of the complex, named GID(SR10). Within the GID complex, interacts directly with GID8, FYV10/GID9 and VID28/GID5.

Its subcellular location is the cytoplasm. It catalyses the reaction S-ubiquitinyl-[E2 ubiquitin-conjugating enzyme]-L-cysteine + [acceptor protein]-L-lysine = [E2 ubiquitin-conjugating enzyme]-L-cysteine + N(6)-ubiquitinyl-[acceptor protein]-L-lysine.. It participates in protein modification; protein ubiquitination. Its function is as follows. E3 ubiquitin-protein ligase component of the GID E3 ligase complex recruiting N termini and catalyzing ubiquitination of proteins targeted for degradation. GID E3 is regulated through assembly with interchangeable N-degron-binding substrate receptors induced by distinct environmental perturbations. Required for the adaptation to the presence of glucose in the growth medium; mediates in association with the substrate receptor VID24/GID4 the degradation of enzymes involved in gluconeogenesis when cells are shifted to glucose-containing medium. Required for proteasome-dependent catabolite degradation of fructose-1,6-bisphosphatase (FBP1), malate dehydrogenase (MDH2), and other gluconeogenic enzymes. This Saccharomyces cerevisiae (strain ATCC 204508 / S288c) (Baker's yeast) protein is E3 ubiquitin-protein ligase RMD5.